The following is a 349-amino-acid chain: Phosphate acyltransferase (349 aa).

It belongs to the PlsX family. As to quaternary structure, homodimer. Probably interacts with PlsY.

The protein resides in the cytoplasm. The enzyme catalyses a fatty acyl-[ACP] + phosphate = an acyl phosphate + holo-[ACP]. The protein operates within lipid metabolism; phospholipid metabolism. Its function is as follows. Catalyzes the reversible formation of acyl-phosphate (acyl-PO(4)) from acyl-[acyl-carrier-protein] (acyl-ACP). This enzyme utilizes acyl-ACP as fatty acyl donor, but not acyl-CoA. The chain is Phosphate acyltransferase from Albidiferax ferrireducens (strain ATCC BAA-621 / DSM 15236 / T118) (Rhodoferax ferrireducens).